The following is a 689-amino-acid chain: FACT complex subunit ssrp1-B (689 aa).

Disordered regions lie at residues 434–565 and 592–689; these read DNKS…KRAT and KAGA…GESD. Residues 461–477 are compositionally biased toward acidic residues; it reads EQDDDSDDESTDEDYDL. Basic and acidic residues-rich tracts occupy residues 478 to 491, 523 to 532, 538 to 563, and 601 to 628; these read DKDMKKQKNDKDSS, IEPKKKESKE, EKKEKPVKEKAVKKGKKTKDPNEPKR, and SADDKKEWNDKAAQDKARYEAEMKEYKK. The segment at residues 561 to 627 is a DNA-binding region (HMG box); it reads PKRATTAYII…RYEAEMKEYK (67 aa). The span at 638 to 650 shows a compositional bias: polar residues; the sequence is GPSTKKSSDQSPG.

Belongs to the SSRP1 family. As to quaternary structure, component of the FACT complex, a stable heterodimer of hmg-3 and spt-16. The FACT complex may also include hmg-4 instead of hmg-3. In terms of tissue distribution, expressed in the germline.

The protein resides in the nucleus. It is found in the chromosome. In terms of biological role, component of the FACT complex, a general chromatin factor that acts to reorganize nucleosomes. The FACT complex is involved in multiple processes that require DNA as a template such as mRNA elongation, DNA replication and DNA repair. During transcription elongation the FACT complex acts as a histone chaperone that both destabilizes and restores nucleosomal structure. It facilitates the passage of RNA polymerase II and transcription by promoting the dissociation of one histone H2A-H2B dimer from the nucleosome, then subsequently promotes the reestablishment of the nucleosome following the passage of RNA polymerase II. Binds specifically to double-stranded DNA. In embryos, may function redundantly with hmg-4 to promote cell cycle progression and development of the anterior pharynx. In the germline, acts non-redundantly with hmg-4 to play a role in oocyte development. In Caenorhabditis elegans, this protein is FACT complex subunit ssrp1-B.